The primary structure comprises 519 residues: Protein BANP (519 aa).

Phosphoserine occurs at positions 19, 90, and 100. Positions 53–90 form a coiled coil; the sequence is IKTICLRLDSIEAKLQALEATCKSLEEKLDLVTNKQHS. K133 participates in a covalent cross-link: Glycyl lysine isopeptide (Lys-Gly) (interchain with G-Cter in SUMO2). The interval 152-342 is interaction with CUX1 and HDAC1; the sequence is NAVPGRRQNT…FSRRTPNSSS (191 aa). Residues 168-177 show a composition bias toward basic and acidic residues; sequence GQEDSHHEDG. The disordered stretch occupies residues 168–196; the sequence is GQEDSHHEDGESGSEASDSVSSCGQAGSQ. The segment covering 180–189 has biased composition (low complexity); that stretch reads GSEASDSVSS. The BEN domain occupies 226–322; that stretch reads EMRVRCAIIP…SKCRTAWRRK (97 aa). K275 carries the post-translational modification N6-acetyllysine. The disordered stretch occupies residues 327 to 364; that stretch reads SLAVKSFSRRTPNSSSYCPSEPMMSTPPPASELPQPQP. Residues 335–344 are compositionally biased toward polar residues; it reads RRTPNSSSYC. Phosphothreonine occurs at positions 337 and 352. Residues 342-393 are DNA-binding; sequence SYCPSEPMMSTPPPASELPQPQPQPQALHYALANAQQVQIHQIGEDGQVQVG. A compositionally biased stretch (pro residues) spans 351–364; sequence STPPPASELPQPQP.

It belongs to the BANP/SMAR1 family. As to quaternary structure, part of a corepressor complex containing BANP, HDAC1, SIN3A, SIN3B, RBL1 and RBL2. Forms a trimeric complex in the nucleus consisting of BANP, HDAC6 and KHDRBS1/SAM68; HDAC6 keeps KHDRBS1 in a deacetylated state which inhibits the inclusion of CD44 alternate exons. The complex is disrupted by MAPK1/MAPK3-mediated phosphorylation of BANP which results in BANP export to the cytoplasm. This facilitates acetylation of KHDRBS1 and CD44 variant exon inclusion. Interacts with TP53. Interacts with CUX1/CDP. Interacts with HDAC1. MAPK1/MAPK3-mediated phosphorylation at Thr-337 and Thr-352 results in export to the cytoplasm. As to expression, down-regulated in breast cancer cell lines.

Its subcellular location is the nucleus. The protein resides in the nucleus speckle. The protein localises to the cytoplasm. Functionally, controls V(D)J recombination during T-cell development by repressing T-cell receptor (TCR) beta enhancer function. Binds to scaffold/matrix attachment region beta (S/MARbeta), an ATC-rich DNA sequence located upstream of the TCR beta enhancer. Represses cyclin D1 transcription by recruiting HDAC1 to its promoter, thereby diminishing H3K9ac, H3S10ph and H4K8ac levels. Promotes TP53 activation, which causes cell cycle arrest. Plays a role in the regulation of alternative splicing. Binds to CD44 pre-mRNA and negatively regulates the inclusion of CD44 proximal variable exons v2-v6 but has no effect on distal variable exons v7-v10. The sequence is that of Protein BANP (BANP) from Homo sapiens (Human).